A 383-amino-acid polypeptide reads, in one-letter code: Putative protein FAM157A (383 aa).

Disordered regions lie at residues 1–21 (MGPLFTTIPGAHSGPMRPLPK) and 177–254 (ATAR…PLGR).

This sequence belongs to the FAM157 family.

The polypeptide is Putative protein FAM157A (FAM157A) (Homo sapiens (Human)).